We begin with the raw amino-acid sequence, 269 residues long: Small ribosomal subunit protein uS2 (269 aa).

This sequence belongs to the universal ribosomal protein uS2 family.

In Synechocystis sp. (strain ATCC 27184 / PCC 6803 / Kazusa), this protein is Small ribosomal subunit protein uS2 (rpsB).